A 162-amino-acid polypeptide reads, in one-letter code: Scytalone dehydratase-like protein claB (162 aa).

Residue Tyr-48 participates in substrate binding. Active-site residues include His-83 and His-108.

This sequence belongs to the scytalone dehydratase family.

It functions in the pathway pigment biosynthesis. Scytalone dehydratase-like protein; part of the gene cluster that mediates the biosynthesis of the bianthraquinone cladofulvin, a conidial pigment not required for virulence but that plays a role in fitness and resistance to environmental stresses including UV light and low-temperature stress. The pathway begins with the synthesis of atrochrysone thioester by the polyketide synthase (PKS) claG. The atrochrysone carboxyl ACP thioesterase claF then breaks the thioester bond and releases the atrochrysone carboxylic acid from claG. This compound is decarboxylated by claH to yield emodin, which is further converted to chrysophanol hydroquinone by the reductase claC and the dehydratase claB. The cytochrome P450 monooxygenase claM then catalyzes the dimerization of nataloe-emodin to cladofulvin. This Passalora fulva (Tomato leaf mold) protein is Scytalone dehydratase-like protein claB.